Consider the following 188-residue polypeptide: UPF0232 protein RHA1_ro03670 (188 aa).

Disordered regions lie at residues 1–20, 31–78, and 166–188; these read MTDD…PEVK, EARA…QPFG, and PTAP…DTYG. A compositionally biased stretch (low complexity) spans 7-16; that stretch reads PTAPAAAAPE.

This sequence belongs to the UPF0232 family.

This is UPF0232 protein RHA1_ro03670 from Rhodococcus jostii (strain RHA1).